Here is a 284-residue protein sequence, read N- to C-terminus: Diaminopimelate epimerase (284 aa).

Positions 20, 53, and 73 each coordinate substrate. Residue C82 is the Proton donor of the active site. Substrate is bound by residues 83–84 (GN), N167, N200, and 218–219 (ER). C227 acts as the Proton acceptor in catalysis. Substrate is bound at residue 228–229 (GS).

Belongs to the diaminopimelate epimerase family. Homodimer.

The protein localises to the cytoplasm. The catalysed reaction is (2S,6S)-2,6-diaminopimelate = meso-2,6-diaminopimelate. It functions in the pathway amino-acid biosynthesis; L-lysine biosynthesis via DAP pathway; DL-2,6-diaminopimelate from LL-2,6-diaminopimelate: step 1/1. In terms of biological role, catalyzes the stereoinversion of LL-2,6-diaminopimelate (L,L-DAP) to meso-diaminopimelate (meso-DAP), a precursor of L-lysine and an essential component of the bacterial peptidoglycan. This chain is Diaminopimelate epimerase, found in Xanthomonas euvesicatoria pv. vesicatoria (strain 85-10) (Xanthomonas campestris pv. vesicatoria).